The sequence spans 174 residues: DNA endonuclease I-HmuI (174 aa).

This Bacillus subtilis (Bacteriophage SP01) protein is DNA endonuclease I-HmuI.